The chain runs to 490 residues: N-succinylglutamate 5-semialdehyde dehydrogenase (490 aa).

Residue 224–229 participates in NAD(+) binding; that stretch reads GSSPTG. Residues Glu-247 and Cys-281 contribute to the active site.

The protein belongs to the aldehyde dehydrogenase family. AstD subfamily.

It carries out the reaction N-succinyl-L-glutamate 5-semialdehyde + NAD(+) + H2O = N-succinyl-L-glutamate + NADH + 2 H(+). Its pathway is amino-acid degradation; L-arginine degradation via AST pathway; L-glutamate and succinate from L-arginine: step 4/5. Catalyzes the NAD-dependent reduction of succinylglutamate semialdehyde into succinylglutamate. The sequence is that of N-succinylglutamate 5-semialdehyde dehydrogenase from Hahella chejuensis (strain KCTC 2396).